The chain runs to 419 residues: Subtilisin-like protease 2 (419 aa).

The signal sequence occupies residues 1–16; that stretch reads MQLLNFGLLLLPFVAG. Residues 17-122 constitute a propeptide that is removed on maturation; that stretch reads DLAPQPEPLL…VHPDQHVYLA (106 aa). The 87-residue stretch at 36–122 folds into the Inhibitor I9 domain; sequence QYIVTLKEGL…VHPDQHVYLA (87 aa). Positions 131-419 constitute a Peptidase S8 domain; sequence RWGLGYMSSK…IQERKFKLPK (289 aa). Catalysis depends on charge relay system residues Asp169 and His201. Asn248, Asn261, and Asn348 each carry an N-linked (GlcNAc...) asparagine glycan. The active-site Charge relay system is the Ser357. A glycan (N-linked (GlcNAc...) asparagine) is linked at Asn388.

The protein belongs to the peptidase S8 family.

The protein resides in the secreted. Its function is as follows. Secreted subtilisin-like serine protease with keratinolytic activity that contributes to pathogenicity. This is Subtilisin-like protease 2 (SUB2) from Arthroderma benhamiae (Trichophyton mentagrophytes).